A 791-amino-acid polypeptide reads, in one-letter code: AP-1 complex subunit gamma-like 2 (791 aa).

Positions 671 to 786 (APIPSVRVFE…QEIFEVDNLP (116 aa)) constitute a GAE domain.

It belongs to the adaptor complexes large subunit family. As to quaternary structure, may interact with AP1S1/Sigma1A-adaptin and AP1S2/Sigma1B-adaptin. Probably does not interact with APB1. Interacts (via GAE domain) with RABEP1, NECAP1, CLINT1 and AFTPH/aftiphilin. Interacts with HBV major surface antigen L. Interacts with HBV core protein C in a ubiquitin-dependent manner. Binds ubiquitin. In terms of tissue distribution, widely expressed.

It is found in the golgi apparatus membrane. The protein resides in the cytoplasmic vesicle membrane. It localises to the endosome membrane. May function in protein sorting in late endosomes or multivesucular bodies (MVBs). Involved in MVB-assisted maturation of hepatitis B virus (HBV). The sequence is that of AP-1 complex subunit gamma-like 2 (Ap1g2) from Mus musculus (Mouse).